The primary structure comprises 346 residues: Histidinol-phosphate aminotransferase (346 aa).

N6-(pyridoxal phosphate)lysine is present on Lys209.

Belongs to the class-II pyridoxal-phosphate-dependent aminotransferase family. Histidinol-phosphate aminotransferase subfamily. Homodimer. The cofactor is pyridoxal 5'-phosphate.

The enzyme catalyses L-histidinol phosphate + 2-oxoglutarate = 3-(imidazol-4-yl)-2-oxopropyl phosphate + L-glutamate. It participates in amino-acid biosynthesis; L-histidine biosynthesis; L-histidine from 5-phospho-alpha-D-ribose 1-diphosphate: step 7/9. The chain is Histidinol-phosphate aminotransferase from Vibrio parahaemolyticus serotype O3:K6 (strain RIMD 2210633).